Consider the following 137-residue polypeptide: Global transcriptional regulator Spx (137 aa).

Cys10 and Cys13 are joined by a disulfide.

It belongs to the ArsC family. Spx subfamily. In terms of assembly, interacts with the C-terminal domain of the alpha subunit of the RNAP.

It is found in the cytoplasm. Global transcriptional regulator that plays a key role in stress response and exerts either positive or negative regulation of genes. Acts by interacting with the C-terminal domain of the alpha subunit of the RNA polymerase (RNAP). This interaction can enhance binding of RNAP to the promoter region of target genes and stimulate their transcription, or block interaction of RNAP with activator. This is Global transcriptional regulator Spx from Streptococcus agalactiae serotype III (strain NEM316).